A 698-amino-acid polypeptide reads, in one-letter code: tRNA (guanine(37)-N(1))-methyltransferase (698 aa).

Residues 207–242 (SPPSVSLTENQDGDPQAQDSLRAVAAPPSPSSRKRG) form a disordered region. Residues His427, 465–466 (DL), 494–495 (DG), and Asn536 each bind S-adenosyl-L-methionine.

Belongs to the class I-like SAM-binding methyltransferase superfamily. TRM5/TYW2 family. In terms of assembly, monomer.

The protein resides in the mitochondrion matrix. The protein localises to the nucleus. It localises to the cytoplasm. It carries out the reaction guanosine(37) in tRNA + S-adenosyl-L-methionine = N(1)-methylguanosine(37) in tRNA + S-adenosyl-L-homocysteine + H(+). Functionally, specifically methylates the N1 position of guanosine-37 in various cytoplasmic and mitochondrial tRNAs. Methylation is not dependent on the nature of the nucleoside 5' of the target nucleoside. This is the first step in the biosynthesis of wybutosine (yW), a modified base adjacent to the anticodon of tRNAs and required for accurate decoding. The chain is tRNA (guanine(37)-N(1))-methyltransferase from Leishmania braziliensis.